Here is a 234-residue protein sequence, read N- to C-terminus: Purine nucleoside phosphorylase DeoD-type (234 aa).

Residue histidine 5 participates in a purine D-ribonucleoside binding. Phosphate is bound by residues glycine 21, arginine 25, arginine 44, and 88–91 (RIGS). Residues 180–182 (EME) and 204–205 (SD) contribute to the a purine D-ribonucleoside site. Residue aspartate 205 is the Proton donor of the active site.

This sequence belongs to the PNP/UDP phosphorylase family. Homohexamer; trimer of homodimers.

The catalysed reaction is a purine D-ribonucleoside + phosphate = a purine nucleobase + alpha-D-ribose 1-phosphate. It carries out the reaction a purine 2'-deoxy-D-ribonucleoside + phosphate = a purine nucleobase + 2-deoxy-alpha-D-ribose 1-phosphate. Functionally, catalyzes the reversible phosphorolytic breakdown of the N-glycosidic bond in the beta-(deoxy)ribonucleoside molecules, with the formation of the corresponding free purine bases and pentose-1-phosphate. The protein is Purine nucleoside phosphorylase DeoD-type of Colwellia psychrerythraea (strain 34H / ATCC BAA-681) (Vibrio psychroerythus).